Reading from the N-terminus, the 284-residue chain is 2-dehydro-3-deoxyphosphooctonate aldolase (284 aa).

This sequence belongs to the KdsA family.

Its subcellular location is the cytoplasm. The enzyme catalyses D-arabinose 5-phosphate + phosphoenolpyruvate + H2O = 3-deoxy-alpha-D-manno-2-octulosonate-8-phosphate + phosphate. Its pathway is carbohydrate biosynthesis; 3-deoxy-D-manno-octulosonate biosynthesis; 3-deoxy-D-manno-octulosonate from D-ribulose 5-phosphate: step 2/3. The protein operates within bacterial outer membrane biogenesis; lipopolysaccharide biosynthesis. The protein is 2-dehydro-3-deoxyphosphooctonate aldolase of Histophilus somni (strain 129Pt) (Haemophilus somnus).